A 375-amino-acid chain; its full sequence is Flagellar P-ring protein (375 aa).

The N-terminal stretch at 1–23 is a signal peptide; it reads MFNQSFLKYMLFGFFLFSFHAHA.

This sequence belongs to the FlgI family. In terms of assembly, the basal body constitutes a major portion of the flagellar organelle and consists of four rings (L,P,S, and M) mounted on a central rod.

The protein localises to the bacterial flagellum basal body. Its function is as follows. Assembles around the rod to form the L-ring and probably protects the motor/basal body from shearing forces during rotation. The polypeptide is Flagellar P-ring protein (Buchnera aphidicola subsp. Baizongia pistaciae (strain Bp)).